The following is a 197-amino-acid chain: uncharacterized protein (197 aa).

Residues 11–31 form a helical membrane-spanning segment; sequence ICGFSLVALTIAGIVGGVYLV.

The protein localises to the membrane. This is an uncharacterized protein from Mycoplasma pneumoniae (strain ATCC 29342 / M129 / Subtype 1) (Mycoplasmoides pneumoniae).